The following is a 362-amino-acid chain: ATPase ARSA2 (362 aa).

27 to 34 (KGGVGKTT) serves as a coordination point for ATP. Residue Asp-58 is part of the active site. Positions 235 and 262 each coordinate ATP.

The protein belongs to the arsA ATPase family. Homodimer. Interacts with SEC61B.

The protein localises to the cytoplasm. Its subcellular location is the cytosol. It localises to the endoplasmic reticulum. In terms of biological role, ATPase required for the post-translational delivery of tail-anchored (TA) proteins to the endoplasmic reticulum. Recognizes and selectively binds the transmembrane domain of TA proteins in the cytosol. This complex then targets to the endoplasmic reticulum by membrane-bound receptors, where the tail-anchored protein is released for insertion. This process is regulated by ATP binding and hydrolysis. ATP binding drives the homodimer towards the closed dimer state, facilitating recognition of newly synthesized TA membrane proteins. ATP hydrolysis is required for insertion. Subsequently, the homodimer reverts towards the open dimer state, lowering its affinity for the membrane-bound receptor, and returning it to the cytosol to initiate a new round of targeting. The protein is ATPase ARSA2 of Chlamydomonas reinhardtii (Chlamydomonas smithii).